A 320-amino-acid polypeptide reads, in one-letter code: Ribonuclease Z (320 aa).

Zn(2+) contacts are provided by H62, H64, D66, H67, H139, D210, and H268. D66 acts as the Proton acceptor in catalysis.

The protein belongs to the RNase Z family. In terms of assembly, homodimer. Zn(2+) is required as a cofactor.

It carries out the reaction Endonucleolytic cleavage of RNA, removing extra 3' nucleotides from tRNA precursor, generating 3' termini of tRNAs. A 3'-hydroxy group is left at the tRNA terminus and a 5'-phosphoryl group is left at the trailer molecule.. Its function is as follows. Zinc phosphodiesterase, which displays some tRNA 3'-processing endonuclease activity. Probably involved in tRNA maturation, by removing a 3'-trailer from precursor tRNA. The sequence is that of Ribonuclease Z from Cyanothece sp. (strain PCC 7425 / ATCC 29141).